Here is a 48-residue protein sequence, read N- to C-terminus: uncharacterized protein (48 aa).

This is an uncharacterized protein from Mus musculus domesticus (western European house mouse).